Here is a 219-residue protein sequence, read N- to C-terminus: Protein matrimony (219 aa).

Residues 74-99 (PPAKAHPHPHQHQHHHHHHKHIHRTQ) are compositionally biased toward basic residues. The tract at residues 74–104 (PPAKAHPHPHQHQHHHHHHKHIHRTQLKPPP) is disordered. An SAM domain is found at 159–219 (NHAANVEQIL…NRIMDVLQTL (61 aa)).

As to quaternary structure, interacts with polo. Interacts with cort. In terms of processing, probably ubiquitinated: degraded during the oocyte-to-embryo transition by the anaphase promoting complex/cyclosome (APC/C) containing cort protein.

The protein localises to the nucleus. It localises to the chromosome. In terms of biological role, polo kinase inhibitor required to maintain G2 arrest in the meiotic cell cycle in females. Holds heterochromatically paired homologs together from the end of pachytene until metaphase I. Haploinsufficient locus for homologous achiasmate segregation and may be required for the maintenance of heterochromatic pairings. The sequence is that of Protein matrimony (mtrm) from Drosophila yakuba (Fruit fly).